A 380-amino-acid chain; its full sequence is GPI-anchor transamidase (380 aa).

Positions 1 to 19 are cleaved as a signal peptide; sequence MIVQFVALLLLNLLQIIAA. Residues 20–354 lie on the Lumenal side of the membrane; the sequence is ESSHTNNWAV…TRELKYKKHP (335 aa). Residues His-145 and Cys-187 contribute to the active site. Asn-307 is a glycosylation site (N-linked (GlcNAc...) asparagine). Residues 355–375 form a helical membrane-spanning segment; that stretch reads ISRIISAVVCISFSIGFPYYA. The Cytoplasmic segment spans residues 376 to 380; sequence SKYLK.

The protein belongs to the peptidase C13 family. As to quaternary structure, forms a complex with PIG-T homolog, PIG-U homolog and PIG-S homolog. Post-translationally, the disulfide bond between PIGK/GPI8 and PIGT is important for normal enzyme activity.

It localises to the endoplasmic reticulum membrane. The protein operates within glycolipid biosynthesis; glycosylphosphatidylinositol-anchor biosynthesis. Mediates GPI anchoring in the endoplasmic reticulum, by replacing a protein's C-terminal GPI attachment signal peptide with a pre-assembled GPI. During this transamidation reaction, the GPI transamidase forms a carbonyl intermediate with the substrate protein. This chain is GPI-anchor transamidase (gpi8), found in Schizosaccharomyces pombe (strain 972 / ATCC 24843) (Fission yeast).